A 1239-amino-acid polypeptide reads, in one-letter code: Erythroid differentiation-related factor 1 (1239 aa).

Disordered stretches follow at residues 1–39 (MGDPKEAGAEASPSGAAARGGLSLLSQADSEEPSAQGSA), 219–269 (AQPV…REPL), 517–559 (PKKE…DPAD), and 620–646 (KKESDLPAADPSTPIPLKYEDESTRGG). Low complexity-rich tracts occupy residues 9–28 (AEASPSGAAARGGLSLLSQA) and 253–263 (SSVSEDPSASS). Over residues 530–547 (NSDESYSEEEEEMADSDE) the composition is skewed to acidic residues. TPR repeat units follow at residues 693-726 (SKAYYILSDAAMSLQKYGRALRYIKLALQSHDTY) and 914-953 (AQAHCGAEDEFKREFSPEEGLYYSKAVDYYLKALRSLGTR).

It localises to the nucleus. Its function is as follows. Transcription factor involved in erythroid differentiation. Involved in transcriptional activation of the globin gene. This is Erythroid differentiation-related factor 1 (Edrf1) from Mus musculus (Mouse).